A 227-amino-acid chain; its full sequence is Phosphoglycolate phosphatase (227 aa).

The active-site Nucleophile is aspartate 8. 2 residues coordinate Mg(2+): aspartate 8 and aspartate 10. Substrate is bound at residue lysine 150. Residues aspartate 173 and aspartate 177 each contribute to the Mg(2+) site.

Belongs to the archaeal SPP-like hydrolase family. Mg(2+) serves as cofactor.

The enzyme catalyses 2-phosphoglycolate + H2O = glycolate + phosphate. Its function is as follows. Catalyzes the dephosphorylation of 2-phosphoglycolate. The polypeptide is Phosphoglycolate phosphatase (Sulfolobus acidocaldarius (strain ATCC 33909 / DSM 639 / JCM 8929 / NBRC 15157 / NCIMB 11770)).